The following is a 207-amino-acid chain: Zinc finger protein JAGGED-like (207 aa).

The span at Met1–Asp16 shows a compositional bias: low complexity. The tract at residues Met1–Arg20 is disordered. Residues Tyr50–His72 form a C2H2-type zinc finger.

As to expression, expressed in the emerging leaf, stamen and carpel primordia. Not expressed in the apical shoot meristem (SAM).

The protein localises to the nucleus. Functionally, acts with JAG to promote growth and patterning in stamens and carpels. Promotes the growth of the abaxial and adaxial sides of floral organs. Promotes the growth of the pollen-bearing microsporangia in anthers, the carpel walls of the gynoecium and the establishment of the correct number of cell layers in carpel walls. Promotes leaf blade growth and trichome development. This chain is Zinc finger protein JAGGED-like (JGL), found in Arabidopsis thaliana (Mouse-ear cress).